The sequence spans 289 residues: Acetyl-coenzyme A carboxylase carboxyl transferase subunit beta (289 aa).

Residues 28 to 289 (VMTKCPKCKK…QGGEMAVWQS (262 aa)) enclose the CoA carboxyltransferase N-terminal domain. Residues Cys-32, Cys-35, Cys-51, and Cys-54 each coordinate Zn(2+). A C4-type zinc finger spans residues 32–54 (CPKCKKIMYTKEVLKNLKVCVNC).

The protein belongs to the AccD/PCCB family. In terms of assembly, acetyl-CoA carboxylase is a heterohexamer composed of biotin carboxyl carrier protein (AccB), biotin carboxylase (AccC) and two subunits each of ACCase subunit alpha (AccA) and ACCase subunit beta (AccD). Zn(2+) serves as cofactor.

The protein resides in the cytoplasm. The enzyme catalyses N(6)-carboxybiotinyl-L-lysyl-[protein] + acetyl-CoA = N(6)-biotinyl-L-lysyl-[protein] + malonyl-CoA. The protein operates within lipid metabolism; malonyl-CoA biosynthesis; malonyl-CoA from acetyl-CoA: step 1/1. Component of the acetyl coenzyme A carboxylase (ACC) complex. Biotin carboxylase (BC) catalyzes the carboxylation of biotin on its carrier protein (BCCP) and then the CO(2) group is transferred by the transcarboxylase to acetyl-CoA to form malonyl-CoA. In Bacillus thuringiensis (strain Al Hakam), this protein is Acetyl-coenzyme A carboxylase carboxyl transferase subunit beta.